The chain runs to 115 residues: Putative membrane protein insertion efficiency factor (115 aa).

Residues 81-115 (DPRPGRCGCKDAGPAVSAGSTEGNPGRRTDGTDPD) are disordered. Residues 105 to 115 (PGRRTDGTDPD) show a composition bias toward basic and acidic residues.

The protein belongs to the UPF0161 family.

It localises to the cell inner membrane. Functionally, could be involved in insertion of integral membrane proteins into the membrane. In Rhodospirillum rubrum (strain ATCC 11170 / ATH 1.1.1 / DSM 467 / LMG 4362 / NCIMB 8255 / S1), this protein is Putative membrane protein insertion efficiency factor.